We begin with the raw amino-acid sequence, 131 residues long: MKKTGILNSDISRVVADMGHMDWLGIGDAGTPVPKTTEKIDLAVSAGMPSFISVLKEVLKELQVQKIYVADEIKDSNPKQLENIKRILPDVEIKFIPHTQLKKNLSEAKAFIRTGEETPFSNVILESGVIF.

His-20 acts as the Proton donor in catalysis. Substrate is bound by residues Asp-28, His-98, and 120 to 122; that span reads FSN.

The protein belongs to the RbsD / FucU family. RbsD subfamily. As to quaternary structure, homodecamer.

It localises to the cytoplasm. It catalyses the reaction beta-D-ribopyranose = beta-D-ribofuranose. Its pathway is carbohydrate metabolism; D-ribose degradation; D-ribose 5-phosphate from beta-D-ribopyranose: step 1/2. Functionally, catalyzes the interconversion of beta-pyran and beta-furan forms of D-ribose. The polypeptide is D-ribose pyranase (Lactobacillus acidophilus (strain ATCC 700396 / NCK56 / N2 / NCFM)).